We begin with the raw amino-acid sequence, 76 residues long: Kappa-actitoxin-Avd4g (76 aa).

The N-terminal stretch at 1–19 (MNKALFLCLVVLCAAVVFA) is a signal peptide. Positions 20–31 (AEDLQKAKHAPF) are excised as a propeptide. Cystine bridges form between cysteine 37–cysteine 72, cysteine 39–cysteine 65, and cysteine 55–cysteine 73.

This sequence belongs to the sea anemone type 3 (BDS) potassium channel toxin family. As to expression, moderately expressed in the ectodermal tissue from the distal and proximal tentacles, body wall, and oral disk.

The protein resides in the secreted. Its subcellular location is the nematocyst. Blocks Kv3 voltage-gated potassium channels. Reduces blood pressure. In Anemonia viridis (Snakelocks anemone), this protein is Kappa-actitoxin-Avd4g.